Reading from the N-terminus, the 329-residue chain is Ribonucleoside-diphosphate reductase small chain (329 aa).

Fe cation is bound by residues aspartate 75, glutamate 106, and histidine 109. Tyrosine 113 is an active-site residue. Positions 168, 202, and 205 each coordinate Fe cation.

Belongs to the ribonucleoside diphosphate reductase small chain family. Heterodimer of a large and a small chain. The cofactor is Fe cation.

The protein resides in the cytoplasm. The catalysed reaction is a 2'-deoxyribonucleoside 5'-diphosphate + [thioredoxin]-disulfide + H2O = a ribonucleoside 5'-diphosphate + [thioredoxin]-dithiol. Provides the precursors necessary for DNA synthesis. Catalyzes the biosynthesis of deoxyribonucleotides from the corresponding ribonucleotides. The protein is Ribonucleoside-diphosphate reductase small chain of Nicotiana tabacum (Common tobacco).